A 702-amino-acid polypeptide reads, in one-letter code: MQTVLFLAALVSLAAAGYPQYHYDVETRKLDPSLLNIQTKVLSLLENWKQVNPDDEYYKIGKEYNVEANMESYTNREVVTEFLSLYKAGFIPKNEVFSIFYENQALEVIALYRLFYYAKDFETFYKTAAFARVWLNEGQFVYAFYLAVIHRADTRGIVLPAPYEIWPEYFMNSDVLSKIYRIQMQKGLIIPEQGPYYGILSKDNAYYFYANYSGPLTYEDNENLLSYFIEDIGWNSYYYYFHNRFPFWENGEQLIGPLKERRGEIYYYVYQKILARYYLERLANGLGEIPRFNWLDKYQTSYYPLLSSYQLPFAQRNDDYYLASGDNINDIQFIDTYEKTFLQLLQKGQFKAYKQEVDLYNSKSINFVGNYWQSNADLYEKVPKRNYWRSYEATARRVLGAAPRSSINYENMNIPTALDFYQTSLRDPAFYQLYAKILDYINEYKEYLEPYSQDVLHYVGVKINDVKVDKLVTYFEYFDWNATNAVYLSEQQLDTVSPSYIVRQPRLNNKPFTVNIDIKSDVESEVVVKIFLGPKYDGNGLPISLEDNWINFIELDWFTHKLTSGQNKIARKSEEFFFFKDDSVSLFKIYELLSNGQVPSYMVDRYIYLPRRLILPRGTQRGFPLQLFVVVYPYQAPVKEWESMRQYIVDNKPFGYPFDRPVTLPYYFNQPNMYFKDVYVYQEGEQYPYYNSYWSQNQVSNH.

The N-terminal stretch at 1 to 16 (MQTVLFLAALVSLAAA) is a signal peptide. N-linked (GlcNAc...) asparagine glycosylation is found at N211 and N481.

The protein belongs to the hemocyanin family. In terms of tissue distribution, hemolymph.

The protein resides in the secreted. Larval storage protein (LSP) which may serve as a store of amino acids for synthesis of adult proteins. Binds the A.niger cell wall component alpha-1,3-glucan, a fungal pathogen-associated molecular pattern (PAMP) that activates the host immune response. In Galleria mellonella (Greater wax moth), this protein is Arylphorin (LOC113516268).